We begin with the raw amino-acid sequence, 414 residues long: COUP transcription factor 2 (414 aa).

The interval Met1–Gln72 is disordered. Over residues Pro27–Pro37 the composition is skewed to pro residues. Residues His38 to Ala57 are compositionally biased toward low complexity. A Phosphothreonine modification is found at Thr51. Residues Gly58–Gly67 are compositionally biased toward gly residues. The nuclear receptor DNA-binding region spans His76–Arg151. 2 consecutive NR C4-type zinc fingers follow at residues Cys79 to Cys99 and Cys115 to Cys139. The interval Ala117 to Gln414 is interaction with ZFPM2. An NR LBD domain is found at Tyr177–Gly403. The important for dimerization stretch occupies residues Leu337–Gln414.

It belongs to the nuclear hormone receptor family. NR2 subfamily. In terms of assembly, interacts with SQSTM1. Binds DNA as a dimer; homodimer or heterodimer with NR2F6. Interacts with NCOA1, NCOA2, NCOA3 and PPARGC1A. Interacts with ZFPM2.

It is found in the nucleus. In terms of biological role, ligand-activated transcription factor. Activated by high concentrations of 9-cis-retinoic acid and all-trans-retinoic acid, but not by dexamethasone, cortisol or progesterone (in vitro). Regulation of the apolipoprotein A-I gene transcription. Binds to DNA site A. May be required to establish ovary identity during early gonad development. This Bos taurus (Bovine) protein is COUP transcription factor 2 (NR2F2).